Here is a 171-residue protein sequence, read N- to C-terminus: Large ribosomal subunit protein uL5 (171 aa).

It belongs to the universal ribosomal protein uL5 family. As to quaternary structure, part of the 50S ribosomal subunit; contacts the 5S rRNA and probably tRNA. Forms a bridge to the 30S subunit in the 70S ribosome.

In terms of biological role, this is one of the proteins that bind and probably mediate the attachment of the 5S RNA into the large ribosomal subunit, where it forms part of the central protuberance. In the 70S ribosome it contacts protein S13 of the 30S subunit (bridge B1b), connecting the 2 subunits; this bridge is implicated in subunit movement. May contact the P site tRNA; the 5S rRNA and some of its associated proteins might help stabilize positioning of ribosome-bound tRNAs. The protein is Large ribosomal subunit protein uL5 of Methanocorpusculum labreanum (strain ATCC 43576 / DSM 4855 / Z).